The following is a 136-amino-acid chain: MLSPKRTKFRRHHRGKMRGVATRGNKVSFGDFGLKTLEPGWLTSRQIEAGRRAMTRYTRRGGQLWIRVFPDKPVTIRPAETRMGSGKGSPEYWVAVVKPGTILYEMKGVTPEIARSAMRVAGFKMPVKTQFVVRDV.

It belongs to the universal ribosomal protein uL16 family. Part of the 50S ribosomal subunit.

The protein resides in the plastid. Its subcellular location is the chloroplast. The polypeptide is Large ribosomal subunit protein uL16c (Mesostigma viride (Green alga)).